A 114-amino-acid chain; its full sequence is MGFPIPDPYVWDPSFRIFYSIIDDEHKTLFNGIFHLGHDDSADNLAELRRCTGKHFLNEQVLMQDSQYAGYAEHVRAHDGFIHQLDNWHGDVKWAKNWLVNHIKTIDFKYKGKI.

Fe cation-binding residues include H26, H55, E59, H74, H78, H102, and D107.

Belongs to the hemerythrin family.

Its function is as follows. Hemerythrin is a respiratory protein in blood cells of certain marine worms. The oxygen-binding site in each chain contains two iron atoms. This is Hemerythrin subunit 2 from Golfingia vulgaris (Marine worm).